Here is a 339-residue protein sequence, read N- to C-terminus: Anthranilate phosphoribosyltransferase (339 aa).

Residues Gly-78, Gly-81 to Asp-82, Thr-86, Asn-88 to Thr-91, Lys-106 to Ser-114, and Ser-118 each bind 5-phospho-alpha-D-ribose 1-diphosphate. An anthranilate-binding site is contributed by Gly-78. Ser-90 is a binding site for Mg(2+). Asn-109 lines the anthranilate pocket. Position 164 (Arg-164) interacts with anthranilate. Mg(2+) contacts are provided by Asp-225 and Glu-226. Positions Thr-248–Ala-265 are enriched in basic and acidic residues. Residues Thr-248–Thr-271 are disordered.

The protein belongs to the anthranilate phosphoribosyltransferase family. Homodimer. Requires Mg(2+) as cofactor.

The catalysed reaction is N-(5-phospho-beta-D-ribosyl)anthranilate + diphosphate = 5-phospho-alpha-D-ribose 1-diphosphate + anthranilate. The protein operates within amino-acid biosynthesis; L-tryptophan biosynthesis; L-tryptophan from chorismate: step 2/5. Catalyzes the transfer of the phosphoribosyl group of 5-phosphorylribose-1-pyrophosphate (PRPP) to anthranilate to yield N-(5'-phosphoribosyl)-anthranilate (PRA). The protein is Anthranilate phosphoribosyltransferase of Methanopyrus kandleri (strain AV19 / DSM 6324 / JCM 9639 / NBRC 100938).